The primary structure comprises 545 residues: CTP synthase (545 aa).

The tract at residues 1–266 is amidoligase domain; that stretch reads MTTRYIFVTG…DELVTKRFGI (266 aa). Ser14 provides a ligand contact to CTP. Residue Ser14 coordinates UTP. Residues 15-20 and Asp72 contribute to the ATP site; that span reads SLGKGI. The Mg(2+) site is built by Asp72 and Glu140. CTP-binding positions include 147-149, 187-192, and Lys223; these read DIE and KTKPTQ. Residues 187–192 and Lys223 contribute to the UTP site; that span reads KTKPTQ. An ATP-binding site is contributed by 239–241; the sequence is KDV. Residues 291–542 form the Glutamine amidotransferase type-1 domain; it reads TIGMVGKYIE…VAAAAAHQKR (252 aa). Gly352 lines the L-glutamine pocket. Cys379 functions as the Nucleophile; for glutamine hydrolysis in the catalytic mechanism. L-glutamine contacts are provided by residues 380–383, Glu403, and Arg470; that span reads LGMQ. Active-site residues include His515 and Glu517.

It belongs to the CTP synthase family. In terms of assembly, homotetramer.

The catalysed reaction is UTP + L-glutamine + ATP + H2O = CTP + L-glutamate + ADP + phosphate + 2 H(+). The enzyme catalyses L-glutamine + H2O = L-glutamate + NH4(+). It carries out the reaction UTP + NH4(+) + ATP = CTP + ADP + phosphate + 2 H(+). It participates in pyrimidine metabolism; CTP biosynthesis via de novo pathway; CTP from UDP: step 2/2. With respect to regulation, allosterically activated by GTP, when glutamine is the substrate; GTP has no effect on the reaction when ammonia is the substrate. The allosteric effector GTP functions by stabilizing the protein conformation that binds the tetrahedral intermediate(s) formed during glutamine hydrolysis. Inhibited by the product CTP, via allosteric rather than competitive inhibition. Functionally, catalyzes the ATP-dependent amination of UTP to CTP with either L-glutamine or ammonia as the source of nitrogen. Regulates intracellular CTP levels through interactions with the four ribonucleotide triphosphates. The polypeptide is CTP synthase (Shewanella woodyi (strain ATCC 51908 / MS32)).